We begin with the raw amino-acid sequence, 321 residues long: Sideroflexin-1-3 (321 aa).

Helical transmembrane passes span 101–121, 146–168, 174–194, 220–240, and 266–286; these read IITG…FWQW, LVTS…NHAV, LLGR…NIPC, AAVV…IPGM, and IQTL…CAFF.

This sequence belongs to the sideroflexin family.

It localises to the mitochondrion membrane. Its function is as follows. Mitochondrial amino-acid transporter that mediates transport of serine into mitochondria. The chain is Sideroflexin-1-3 from Drosophila melanogaster (Fruit fly).